The chain runs to 141 residues: Large ribosomal subunit protein uL11 (141 aa).

It belongs to the universal ribosomal protein uL11 family. Part of the ribosomal stalk of the 50S ribosomal subunit. Interacts with L10 and the large rRNA to form the base of the stalk. L10 forms an elongated spine to which L12 dimers bind in a sequential fashion forming a multimeric L10(L12)X complex. Post-translationally, one or more lysine residues are methylated.

Its function is as follows. Forms part of the ribosomal stalk which helps the ribosome interact with GTP-bound translation factors. This chain is Large ribosomal subunit protein uL11, found in Nostoc punctiforme (strain ATCC 29133 / PCC 73102).